We begin with the raw amino-acid sequence, 261 residues long: Thiamine thiazole synthase (261 aa).

NAD(+) contacts are provided by residues S40, 59–60, G67, V133, and 159–161; these read ER and HID. Fe cation-binding residues include D161 and H176. NAD(+)-binding residues include S179 and M226. Residue R236 participates in glycine binding.

This sequence belongs to the THI4 family. In terms of assembly, homooctamer; tetramer of dimers. It depends on Fe(2+) as a cofactor.

The enzyme catalyses hydrogen sulfide + glycine + NAD(+) = ADP-5-ethyl-4-methylthiazole-2-carboxylate + nicotinamide + 3 H2O + H(+). It functions in the pathway cofactor biosynthesis; thiamine diphosphate biosynthesis. Its function is as follows. Involved in the biosynthesis of the thiazole moiety of thiamine. Catalyzes the conversion of NAD and glycine to adenosine diphosphate 5-(2-hydroxyethyl)-4-methylthiazole-2-carboxylate (ADT), an adenylated thiazole intermediate, using free sulfide as a source of sulfur. This Methanococcus maripaludis (strain C5 / ATCC BAA-1333) protein is Thiamine thiazole synthase.